Consider the following 417-residue polypeptide: Serine hydroxymethyltransferase (417 aa).

Residues Leu-120 and 124-126 (GHL) contribute to the (6S)-5,6,7,8-tetrahydrofolate site. Residue Lys-229 is modified to N6-(pyridoxal phosphate)lysine.

Belongs to the SHMT family. As to quaternary structure, homodimer. Requires pyridoxal 5'-phosphate as cofactor.

It localises to the cytoplasm. It carries out the reaction (6R)-5,10-methylene-5,6,7,8-tetrahydrofolate + glycine + H2O = (6S)-5,6,7,8-tetrahydrofolate + L-serine. Its pathway is one-carbon metabolism; tetrahydrofolate interconversion. It participates in amino-acid biosynthesis; glycine biosynthesis; glycine from L-serine: step 1/1. Catalyzes the reversible interconversion of serine and glycine with tetrahydrofolate (THF) serving as the one-carbon carrier. This reaction serves as the major source of one-carbon groups required for the biosynthesis of purines, thymidylate, methionine, and other important biomolecules. Also exhibits THF-independent aldolase activity toward beta-hydroxyamino acids, producing glycine and aldehydes, via a retro-aldol mechanism. In Anaeromyxobacter sp. (strain Fw109-5), this protein is Serine hydroxymethyltransferase.